A 263-amino-acid polypeptide reads, in one-letter code: MSLAMLTRNMLRRTSVRAFASSASNFTAGKDSARKLSPEEAKAEAAKLAIQSLKDVGSVFSSGSDDAVQPIDTRPVFENPELFGTLNLLHQGQVLKELQEKYDKNWNKLTDEEKKLGYYIAYGNWGPREKFINWNTQEAPYDLPFRVPSKVRLSNPQANDVVHKLEPLYLSETPVRKEQFDTSKMDPVTKTFIYITLFVMLFAISRDKNTGESGKPQEIIIEDRYMKSKLEKEQKEKEKEIEEENRKNQEKQARRKWYYLWLK.

Residues 1–26 constitute a mitochondrion transit peptide; that stretch reads MSLAMLTRNMLRRTSVRAFASSASNF. Residues 188-204 form a helical membrane-spanning segment; it reads VTKTFIYITLFVMLFAI. Residues 232–252 are disordered; that stretch reads KEQKEKEKEIEEENRKNQEKQ.

This sequence belongs to the GEP7 family.

It localises to the mitochondrion membrane. Involved in respiratory growth and required for cell survival in the absence of prohibitins. In Clavispora lusitaniae (strain ATCC 42720) (Yeast), this protein is Genetic interactor of prohibitin 7, mitochondrial (GEP7).